The primary structure comprises 368 residues: Microtubule-associated protein Jupiter (368 aa).

Serine 30 is modified (phosphoserine). Threonine 41 carries the phosphothreonine modification. The span at arginine 81–leucine 93 shows a compositional bias: basic and acidic residues. Residues arginine 81–asparagine 106 form a disordered region. Threonine 102 carries the post-translational modification Phosphothreonine. 3 positions are modified to phosphoserine: serine 111, serine 146, and serine 157. 2 stretches are compositionally biased toward low complexity: residues asparagine 129–serine 157 and glycine 238–arginine 248. Disordered stretches follow at residues asparagine 129 to asparagine 164, serine 196 to asparagine 256, and lysine 316 to tryptophan 368. Over residues glycine 337–asparagine 354 the composition is skewed to polar residues.

The protein belongs to the MAP Jupiter family.

It is found in the nucleus. It localises to the cytoplasm. Its subcellular location is the cytoskeleton. The protein resides in the spindle. Its function is as follows. Binds to all microtubule populations. In Drosophila willistoni (Fruit fly), this protein is Microtubule-associated protein Jupiter.